Reading from the N-terminus, the 321-residue chain is 4-hydroxy-3-methylbut-2-enyl diphosphate reductase (321 aa).

C13 contributes to the [4Fe-4S] cluster binding site. (2E)-4-hydroxy-3-methylbut-2-enyl diphosphate-binding residues include H41 and H75. Dimethylallyl diphosphate is bound by residues H41 and H75. Isopentenyl diphosphate is bound by residues H41 and H75. C97 contacts [4Fe-4S] cluster. H125 serves as a coordination point for (2E)-4-hydroxy-3-methylbut-2-enyl diphosphate. A dimethylallyl diphosphate-binding site is contributed by H125. H125 lines the isopentenyl diphosphate pocket. E127 acts as the Proton donor in catalysis. T168 lines the (2E)-4-hydroxy-3-methylbut-2-enyl diphosphate pocket. C225 provides a ligand contact to [4Fe-4S] cluster. (2E)-4-hydroxy-3-methylbut-2-enyl diphosphate contacts are provided by S253, S254, N255, and S302. 4 residues coordinate dimethylallyl diphosphate: S253, S254, N255, and S302. Residues S253, S254, N255, and S302 each coordinate isopentenyl diphosphate.

It belongs to the IspH family. It depends on [4Fe-4S] cluster as a cofactor.

It carries out the reaction isopentenyl diphosphate + 2 oxidized [2Fe-2S]-[ferredoxin] + H2O = (2E)-4-hydroxy-3-methylbut-2-enyl diphosphate + 2 reduced [2Fe-2S]-[ferredoxin] + 2 H(+). The enzyme catalyses dimethylallyl diphosphate + 2 oxidized [2Fe-2S]-[ferredoxin] + H2O = (2E)-4-hydroxy-3-methylbut-2-enyl diphosphate + 2 reduced [2Fe-2S]-[ferredoxin] + 2 H(+). It functions in the pathway isoprenoid biosynthesis; dimethylallyl diphosphate biosynthesis; dimethylallyl diphosphate from (2E)-4-hydroxy-3-methylbutenyl diphosphate: step 1/1. Its pathway is isoprenoid biosynthesis; isopentenyl diphosphate biosynthesis via DXP pathway; isopentenyl diphosphate from 1-deoxy-D-xylulose 5-phosphate: step 6/6. Catalyzes the conversion of 1-hydroxy-2-methyl-2-(E)-butenyl 4-diphosphate (HMBPP) into a mixture of isopentenyl diphosphate (IPP) and dimethylallyl diphosphate (DMAPP). Acts in the terminal step of the DOXP/MEP pathway for isoprenoid precursor biosynthesis. This is 4-hydroxy-3-methylbut-2-enyl diphosphate reductase from Pelodictyon phaeoclathratiforme (strain DSM 5477 / BU-1).